The sequence spans 96 residues: ATP synthase subunit c (96 aa).

The next 2 membrane-spanning stretches (helical) occupy residues 28 to 50 (LGAG…NIGA) and 75 to 95 (AVTE…LFVL).

This sequence belongs to the ATPase C chain family. F-type ATPases have 2 components, F(1) - the catalytic core - and F(0) - the membrane proton channel. F(1) has five subunits: alpha(3), beta(3), gamma(1), delta(1), epsilon(1). F(0) has three main subunits: a(1), b(2) and c(10-14). The alpha and beta chains form an alternating ring which encloses part of the gamma chain. F(1) is attached to F(0) by a central stalk formed by the gamma and epsilon chains, while a peripheral stalk is formed by the delta and b chains.

It is found in the cell inner membrane. Functionally, f(1)F(0) ATP synthase produces ATP from ADP in the presence of a proton or sodium gradient. F-type ATPases consist of two structural domains, F(1) containing the extramembraneous catalytic core and F(0) containing the membrane proton channel, linked together by a central stalk and a peripheral stalk. During catalysis, ATP synthesis in the catalytic domain of F(1) is coupled via a rotary mechanism of the central stalk subunits to proton translocation. In terms of biological role, key component of the F(0) channel; it plays a direct role in translocation across the membrane. A homomeric c-ring of between 10-14 subunits forms the central stalk rotor element with the F(1) delta and epsilon subunits. The chain is ATP synthase subunit c from Petrotoga mobilis (strain DSM 10674 / SJ95).